Consider the following 243-residue polypeptide: 1-(5-phosphoribosyl)-5-[(5-phosphoribosylamino)methylideneamino] imidazole-4-carboxamide isomerase (243 aa).

The Proton acceptor role is filled by D8. D129 acts as the Proton donor in catalysis.

Belongs to the HisA/HisF family.

The protein resides in the cytoplasm. The enzyme catalyses 1-(5-phospho-beta-D-ribosyl)-5-[(5-phospho-beta-D-ribosylamino)methylideneamino]imidazole-4-carboxamide = 5-[(5-phospho-1-deoxy-D-ribulos-1-ylimino)methylamino]-1-(5-phospho-beta-D-ribosyl)imidazole-4-carboxamide. Its pathway is amino-acid biosynthesis; L-histidine biosynthesis; L-histidine from 5-phospho-alpha-D-ribose 1-diphosphate: step 4/9. This Moorella thermoacetica (strain ATCC 39073 / JCM 9320) protein is 1-(5-phosphoribosyl)-5-[(5-phosphoribosylamino)methylideneamino] imidazole-4-carboxamide isomerase.